Here is a 109-residue protein sequence, read N- to C-terminus: MGSKMAIVIVALFAMLLFISPEVACRNFKEELGEVVKETNEESDARLAGSSGGDLDKSYCPVHLPLMEYRKWIGNCRCGCCQWTTEPEVCLYCCPESHVPDLPSRPRAY.

The N-terminal stretch at 1-25 is a signal peptide; the sequence is MGSKMAIVIVALFAMLLFISPEVAC.

Belongs to the GRP family.

Its subcellular location is the symbiosome. It is found in the peribacteroid membrane. The chain is Nodulin-16 (GMN16) from Glycine max (Soybean).